Consider the following 834-residue polypeptide: MRVAQSWLTEIIERTNAGWSVTPEELDAGFVRVGLEVEEVDRLERVGGDIERPLVVGRVAEITELTEFKKPIRFCKVDVGAPELQEIICGARNFAVGDLVVVVLPGGVLPGGFRITSRKTYGHVSNGMICSVAELGIGKDHSGILVLEPGTAEPGTDANELLGLDDTVIELNITPDRGYCFSVRGLARELACGFDLEYLDPAVRTLPEDAAEAWPITIEPASQCTRFAARRVTGIDPNAVSPWWLQRRLLLSGVRPISPAVDVTNYVMLELGQPLHAFDAAKLSGGLVVRTAKPGEKLRTLDDTERTLDAEDVVIADDSGAVSLAGIMGGASTEVGEGTTDVLLEAATWNPLLVYRTARRHKLVSEAGKRYERVVDPEINVAALDRAATLLAEIAGGTVEPVLSDVRVPTPAPEPIRMDIDLPDRVAGVAYPTGTAARRLAQIGCHVEVSVDEESGHGQLVVTPPSWRPDLAQPADLVEEVLRLEGLEQIPSVVPTAPAGRGLTPEQRRRRAVSRALAFAGGVEVPPPVFLPAGVFDTWGLDADDPRRTTTRVLNPLDVERAELATTLLPGLLEVAQRNISRGARDLTLYGIAQVVLPTGDTKPVAPLPVDRRPTDEQIAELLGSLPDQPVHVAAVLTGRREPRGPWGPGRQAEAADAFALVDAVADAAGVVIERRPAAYLPWHPGRCAELVVEGRVVGYAGELHPAVLERSGLPARTCALELDLDALPLRESRPVPVVSPFPAVLQDVSVSVSKSVAAAAVESALRSGGGELLEDIALFDVYEGAQAGEGRKSLTYALRFRAPDRTLTEDEASAARDAAVAAAADAVGAVLRG.

In terms of domain architecture, tRNA-binding spans glycine 48–asparagine 159. The 82-residue stretch at proline 411–serine 492 folds into the B5 domain. The Mg(2+) site is built by aspartate 470, aspartate 476, glutamate 479, and glutamate 480. The region spanning serine 740–arginine 833 is the FDX-ACB domain.

The protein belongs to the phenylalanyl-tRNA synthetase beta subunit family. Type 1 subfamily. As to quaternary structure, tetramer of two alpha and two beta subunits. The cofactor is Mg(2+).

It localises to the cytoplasm. The enzyme catalyses tRNA(Phe) + L-phenylalanine + ATP = L-phenylalanyl-tRNA(Phe) + AMP + diphosphate + H(+). The chain is Phenylalanine--tRNA ligase beta subunit from Nocardia farcinica (strain IFM 10152).